A 510-amino-acid polypeptide reads, in one-letter code: ATP synthase subunit alpha (510 aa).

169 to 176 serves as a coordination point for ATP; it reads GDRQTGKT.

The protein belongs to the ATPase alpha/beta chains family. As to quaternary structure, F-type ATPases have 2 components, CF(1) - the catalytic core - and CF(0) - the membrane proton channel. CF(1) has five subunits: alpha(3), beta(3), gamma(1), delta(1), epsilon(1). CF(0) has three main subunits: a(1), b(2) and c(9-12). The alpha and beta chains form an alternating ring which encloses part of the gamma chain. CF(1) is attached to CF(0) by a central stalk formed by the gamma and epsilon chains, while a peripheral stalk is formed by the delta and b chains.

It is found in the cell membrane. It carries out the reaction ATP + H2O + 4 H(+)(in) = ADP + phosphate + 5 H(+)(out). In terms of biological role, produces ATP from ADP in the presence of a proton gradient across the membrane. The alpha chain is a regulatory subunit. This Buchnera aphidicola subsp. Schizaphis graminum (strain Sg) protein is ATP synthase subunit alpha.